The primary structure comprises 358 residues: uncharacterized protein (358 aa).

An ATP-binding site is contributed by 29 to 36; sequence GPINSGKT.

Belongs to the archaeal ATPase family.

This is an uncharacterized protein from Methanocaldococcus jannaschii (strain ATCC 43067 / DSM 2661 / JAL-1 / JCM 10045 / NBRC 100440) (Methanococcus jannaschii).